Consider the following 375-residue polypeptide: Dual-specificity RNA methyltransferase RlmN (375 aa).

Glutamate 93 functions as the Proton acceptor in the catalytic mechanism. Residues 99–346 (ETNRGTLCVS…TTTRKTRGDD (248 aa)) form the Radical SAM core domain. Cysteine 106 and cysteine 351 are oxidised to a cystine. Cysteine 113, cysteine 117, and cysteine 120 together coordinate [4Fe-4S] cluster. S-adenosyl-L-methionine contacts are provided by residues 177-178 (GE), serine 209, 231-233 (SLH), and asparagine 308. Cysteine 351 acts as the S-methylcysteine intermediate in catalysis.

Belongs to the radical SAM superfamily. RlmN family. [4Fe-4S] cluster is required as a cofactor.

It localises to the cytoplasm. It carries out the reaction adenosine(2503) in 23S rRNA + 2 reduced [2Fe-2S]-[ferredoxin] + 2 S-adenosyl-L-methionine = 2-methyladenosine(2503) in 23S rRNA + 5'-deoxyadenosine + L-methionine + 2 oxidized [2Fe-2S]-[ferredoxin] + S-adenosyl-L-homocysteine. The enzyme catalyses adenosine(37) in tRNA + 2 reduced [2Fe-2S]-[ferredoxin] + 2 S-adenosyl-L-methionine = 2-methyladenosine(37) in tRNA + 5'-deoxyadenosine + L-methionine + 2 oxidized [2Fe-2S]-[ferredoxin] + S-adenosyl-L-homocysteine. Specifically methylates position 2 of adenine 2503 in 23S rRNA and position 2 of adenine 37 in tRNAs. m2A2503 modification seems to play a crucial role in the proofreading step occurring at the peptidyl transferase center and thus would serve to optimize ribosomal fidelity. This chain is Dual-specificity RNA methyltransferase RlmN, found in Azoarcus sp. (strain BH72).